The following is a 144-amino-acid chain: uncharacterized protein (144 aa).

This is an uncharacterized protein from Saccharomyces cerevisiae (strain ATCC 204508 / S288c) (Baker's yeast).